A 192-amino-acid chain; its full sequence is NADH-quinone oxidoreductase subunit B (192 aa).

Residues C71, C72, C136, and C166 each coordinate [4Fe-4S] cluster.

It belongs to the complex I 20 kDa subunit family. NDH-1 is composed of 14 different subunits. Subunits NuoB, C, D, E, F, and G constitute the peripheral sector of the complex. It depends on [4Fe-4S] cluster as a cofactor.

The protein resides in the cell inner membrane. It catalyses the reaction a quinone + NADH + 5 H(+)(in) = a quinol + NAD(+) + 4 H(+)(out). In terms of biological role, NDH-1 shuttles electrons from NADH, via FMN and iron-sulfur (Fe-S) centers, to quinones in the respiratory chain. The immediate electron acceptor for the enzyme in this species is believed to be ubiquinone. Couples the redox reaction to proton translocation (for every two electrons transferred, four hydrogen ions are translocated across the cytoplasmic membrane), and thus conserves the redox energy in a proton gradient. This chain is NADH-quinone oxidoreductase subunit B, found in Sinorhizobium medicae (strain WSM419) (Ensifer medicae).